We begin with the raw amino-acid sequence, 474 residues long: Glutamate--tRNA ligase 1 (474 aa).

Residues 10–20 (PSPTGFLHIGG) carry the 'HIGH' region motif. A 'KMSKS' region motif is present at residues 239–243 (KLSKR). ATP is bound at residue Lys-242.

It belongs to the class-I aminoacyl-tRNA synthetase family. Glutamate--tRNA ligase type 1 subfamily. In terms of assembly, monomer.

It is found in the cytoplasm. The catalysed reaction is tRNA(Glu) + L-glutamate + ATP = L-glutamyl-tRNA(Glu) + AMP + diphosphate. In terms of biological role, catalyzes the attachment of glutamate to tRNA(Glu) in a two-step reaction: glutamate is first activated by ATP to form Glu-AMP and then transferred to the acceptor end of tRNA(Glu). The polypeptide is Glutamate--tRNA ligase 1 (Methylobacterium sp. (strain 4-46)).